Here is a 311-residue protein sequence, read N- to C-terminus: GTPase Era (311 aa).

The 168-residue stretch at 18 to 185 folds into the Era-type G domain; that stretch reads RSGFVALIGA…AKYLAESVPN (168 aa). The segment at 26-33 is G1; that stretch reads GAPNAGKS. Residue 26 to 33 coordinates GTP; sequence GAPNAGKS. Residues 52 to 56 are G2; it reads QTTRA. The tract at residues 73–76 is G3; that stretch reads DTPG. GTP contacts are provided by residues 73–77 and 135–138; these read DTPGI and NKVD. Residues 135 to 138 are G4; it reads NKVD. The G5 stretch occupies residues 164-166; it reads ISA. Residues 216 to 293 form the KH type-2 domain; sequence LHEELPYAST…HLFLFVKVRE (78 aa).

The protein belongs to the TRAFAC class TrmE-Era-EngA-EngB-Septin-like GTPase superfamily. Era GTPase family. As to quaternary structure, monomer.

Its subcellular location is the cytoplasm. It localises to the cell inner membrane. In terms of biological role, an essential GTPase that binds both GDP and GTP, with rapid nucleotide exchange. Plays a role in 16S rRNA processing and 30S ribosomal subunit biogenesis and possibly also in cell cycle regulation and energy metabolism. This is GTPase Era from Brucella suis biovar 1 (strain 1330).